The following is a 191-amino-acid chain: MEPIRVIESRTVVLPRENVDTDQIIPARFLKVTDKKGLGKALFSDWRYAADGSPRPDFVLNRPEAQGCSILVAGDNFGCGSSREHAPWALVDAGVRAVISTRIADIFRNNALKNGLVPVVLDPASHAKLLAAPGASVRVDVEAQTVTLPDGSTAKFPIDGFARYCLLNGVDELGFLLAQDADIAAFEGGRR.

Belongs to the LeuD family. LeuD type 1 subfamily. Heterodimer of LeuC and LeuD.

It carries out the reaction (2R,3S)-3-isopropylmalate = (2S)-2-isopropylmalate. It functions in the pathway amino-acid biosynthesis; L-leucine biosynthesis; L-leucine from 3-methyl-2-oxobutanoate: step 2/4. Its function is as follows. Catalyzes the isomerization between 2-isopropylmalate and 3-isopropylmalate, via the formation of 2-isopropylmaleate. The polypeptide is 3-isopropylmalate dehydratase small subunit (Anaeromyxobacter dehalogenans (strain 2CP-C)).